A 95-amino-acid chain; its full sequence is Aspartyl/glutamyl-tRNA(Asn/Gln) amidotransferase subunit C (95 aa).

Belongs to the GatC family. In terms of assembly, heterotrimer of A, B and C subunits.

The catalysed reaction is L-glutamyl-tRNA(Gln) + L-glutamine + ATP + H2O = L-glutaminyl-tRNA(Gln) + L-glutamate + ADP + phosphate + H(+). It catalyses the reaction L-aspartyl-tRNA(Asn) + L-glutamine + ATP + H2O = L-asparaginyl-tRNA(Asn) + L-glutamate + ADP + phosphate + 2 H(+). Its function is as follows. Allows the formation of correctly charged Asn-tRNA(Asn) or Gln-tRNA(Gln) through the transamidation of misacylated Asp-tRNA(Asn) or Glu-tRNA(Gln) in organisms which lack either or both of asparaginyl-tRNA or glutaminyl-tRNA synthetases. The reaction takes place in the presence of glutamine and ATP through an activated phospho-Asp-tRNA(Asn) or phospho-Glu-tRNA(Gln). The chain is Aspartyl/glutamyl-tRNA(Asn/Gln) amidotransferase subunit C from Chelativorans sp. (strain BNC1).